Consider the following 396-residue polypeptide: Tyrosine--tRNA ligase (396 aa).

Positions 39–48 (PTAPDLHLGH) match the 'HIGH' region motif. The 'KMSKS' region motif lies at 223–227 (KMSKS). K226 is an ATP binding site. One can recognise an S4 RNA-binding domain in the interval 334–395 (LPVPQLLKQA…GKRKFARVTV (62 aa)).

It belongs to the class-I aminoacyl-tRNA synthetase family. TyrS type 2 subfamily. As to quaternary structure, homodimer.

It localises to the cytoplasm. It carries out the reaction tRNA(Tyr) + L-tyrosine + ATP = L-tyrosyl-tRNA(Tyr) + AMP + diphosphate + H(+). Its function is as follows. Catalyzes the attachment of tyrosine to tRNA(Tyr) in a two-step reaction: tyrosine is first activated by ATP to form Tyr-AMP and then transferred to the acceptor end of tRNA(Tyr). This chain is Tyrosine--tRNA ligase, found in Thiobacillus denitrificans (strain ATCC 25259 / T1).